The chain runs to 448 residues: Probable ribonuclease FAU-1 (448 aa).

Residues 426–448 (EAPGGKICTSEGLTSALPQSSSA) form a disordered region. Positions 436–448 (EGLTSALPQSSSA) are enriched in polar residues.

Belongs to the FAU-1 family.

Probable RNase involved in rRNA stability through maturation and/or degradation of precursor rRNAs. Binds to RNA in loop regions with AU-rich sequences. The chain is Probable ribonuclease FAU-1 from Pyrobaculum islandicum (strain DSM 4184 / JCM 9189 / GEO3).